Consider the following 444-residue polypeptide: P2X purinoceptor 5 (444 aa).

Topologically, residues 1 to 30 are cytoplasmic; the sequence is MGQAGCKGLCLSLFDYKTEKYVIAKNKKVG. Residues 31–51 form a helical membrane-spanning segment; sequence LLYRLLQASILAYLVVWVFLI. Residues 52–319 are Extracellular-facing; that stretch reads KKGYQDVDTS…RTLMKAYGIR (268 aa). N-linked (GlcNAc...) asparagine glycosylation is present at asparagine 77. 3 disulfides stabilise this stretch: cysteine 118–cysteine 169, cysteine 129–cysteine 152, and cysteine 135–cysteine 163. The N-linked (GlcNAc...) asparagine glycan is linked to asparagine 202. Intrachain disulfides connect cysteine 220–cysteine 229 and cysteine 263–cysteine 272. A helical membrane pass occupies residues 320–362; that stretch reads FDVMVNGKAGKFSIIPTIINVGSGVALMGAGAFFCDLVLIYLI. The Cytoplasmic portion of the chain corresponds to 363–444; sequence KKREFYRDKK…PQLLEPHRST (82 aa). The segment at 378–444 is disordered; it reads GLEDSSQEAE…PQLLEPHRST (67 aa).

The protein belongs to the P2X receptor family. As to quaternary structure, functional P2XRs are organized as homomeric and heteromeric trimers. Homotrimer. Forms heterotrimer with P2RX1. Expressed at high levels in brain and immune system.

The protein resides in the cell membrane. It carries out the reaction Na(+)(in) = Na(+)(out). It catalyses the reaction Ca(2+)(in) = Ca(2+)(out). The catalysed reaction is chloride(in) = chloride(out). Activated by ATP. Slowly desensitizing. Sensitive to the ATP agonist alpha/beta-methylene-ATP. Its function is as follows. ATP-gated nonselective transmembrane cation channel permeable to potassium, sodium and calcium. Unlike other P2RX receptors, the P2X5 receptor is also permeable to chloride. May play a supporting role in the inflammatory response. In terms of biological role, non-functional. The polypeptide is P2X purinoceptor 5 (Homo sapiens (Human)).